A 159-amino-acid polypeptide reads, in one-letter code: Nucleotide-binding protein PST_3153 (159 aa).

The protein belongs to the YajQ family.

Nucleotide-binding protein. The sequence is that of Nucleotide-binding protein PST_3153 from Stutzerimonas stutzeri (strain A1501) (Pseudomonas stutzeri).